The following is a 435-amino-acid chain: Transcription activator AKTR-2 (435 aa).

Residues 16-43 (CDFCTQSKLRCNKNKPSCRRCTIQQQVC) constitute a DNA-binding region (zn(2)-C6 fungal-type). The segment at 49-103 (RRTGRPPKHPRRADDSQETSGQHGHQDPMTSAPADSCEQQSSHLDLEGDDTDFTL) is disordered. Basic residues predominate over residues 50 to 59 (RTGRPPKHPR).

It is found in the nucleus. Transcription factor that regulates the expression of the gene clusters that mediate the biosynthesis of the host-selective toxins (HSTs) AK-toxins responsible for Japanese pear black spot disease by the Japanese pear pathotype. AK-toxins are esters of 9,10-epoxy 8-hydroxy 9-methyldecatrienoic acid (EDA). On cellular level, AK-toxins affect plasma membrane of susceptible cells and cause a sudden increase in loss of K(+) after a few minutes of toxin treatment. The protein is Transcription activator AKTR-2 of Alternaria alternata (Alternaria rot fungus).